The chain runs to 170 residues: Thialysine N-epsilon-acetyltransferase (170 aa).

The 163-residue stretch at 4–166 (TRIREARESD…FRFEGEAMRE (163 aa)) folds into the N-acetyltransferase domain. Substrate is bound at residue 27–28 (FE). Lys29 is subject to N6-acetyllysine. Glu92 is a substrate binding site. Acetyl-CoA contacts are provided by residues 94–96 (IYV), 102–107 (GQGIGT), 133–135 (NKK), and Tyr140. The active-site Proton donor is the Tyr140. Glu152 contributes to the substrate binding site.

The protein belongs to the acetyltransferase family. In terms of assembly, homodimer.

The protein localises to the cytoplasm. The catalysed reaction is S-(2-aminoethyl)-L-cysteine + acetyl-CoA = S-(2-acetamidoethyl)-L-cysteine + CoA + H(+). It carries out the reaction an alkane-alpha,omega-diamine + acetyl-CoA = an N-acetylalkane-alpha,omega-diamine + CoA + H(+). Catalyzes the N-acetylation of the amino acid thialysine (S-(2-aminoethyl)-L-cysteine), a L-lysine analog with the 4-methylene group substituted with a sulfur. May also catalyze acetylation of polyamines, such as norspermidine, spermidine or spermine. However, ability to acetylate polyamines is weak, suggesting that it does not act as a diamine acetyltransferase in vivo. This Mus musculus (Mouse) protein is Thialysine N-epsilon-acetyltransferase.